A 178-amino-acid chain; its full sequence is Ribosome maturation factor RimM (178 aa).

The PRC barrel domain occupies 101–178; sequence ADEYYWYQLE…VMRVEWDADF (78 aa).

Belongs to the RimM family. In terms of assembly, binds ribosomal protein uS19.

The protein localises to the cytoplasm. An accessory protein needed during the final step in the assembly of 30S ribosomal subunit, possibly for assembly of the head region. Essential for efficient processing of 16S rRNA. May be needed both before and after RbfA during the maturation of 16S rRNA. It has affinity for free ribosomal 30S subunits but not for 70S ribosomes. This chain is Ribosome maturation factor RimM, found in Pseudomonas fluorescens (strain Pf0-1).